The sequence spans 862 residues: Rho guanine nucleotide exchange factor 7 (862 aa).

In terms of domain architecture, Calponin-homology (CH) spans methionine 1 to alanine 112. Serine 132, serine 155, serine 164, serine 228, and serine 236 each carry phosphoserine. An SH3 domain is found at asparagine 163–proline 222. One can recognise a DH domain in the interval tyrosine 250–valine 430. The 106-residue stretch at aspartate 452–lysine 557 folds into the PH domain. A Phosphoserine modification is found at serine 497. Disordered stretches follow at residues threonine 559–lysine 591, lysine 657–valine 679, and aspartate 728–aspartate 748. The span at proline 572–serine 585 shows a compositional bias: polar residues. Basic residues predominate over residues lysine 657–glutamate 669. Residues arginine 670–valine 679 are compositionally biased toward basic and acidic residues. Serine 673 bears the Phosphoserine mark. Low complexity predominate over residues serine 731–leucine 744. Serine 776 is subject to Phosphoserine. A coiled-coil region spans residues lysine 804–aspartate 854.

In terms of assembly, interacts with PAK kinases through the SH3 domain. Interacts with unphosphorylated PAK1. Interacts with ITCH. Interacts with SCRIB; interaction is direct and may play a role in regulation of apoptosis. Interacts with GIT1 and TGFB1I1. Interacts with FRMPD4 (via N-terminus). Interacts with CaMK1. Interacts with BIN2. Interacts with PTK2/FAK1 and RAC1. Interacts with PARVB. Interacts with YWHAZ. Interacts (via PH domain) with NOX1 (via FAD-binding FR-type domain). Phosphorylated on Ser-673 by CaMK1; enhancement of GEF activity and downstream activation of RAC1. Phosphorylated by PTK2/FAK1; this promotes interaction with RAC1. Seems to be expressed in the central nervous system. Isoform B, isoform C and isoform E are expressed with highest levels in brain and testis.

The protein resides in the cell junction. It localises to the focal adhesion. It is found in the cell projection. Its subcellular location is the ruffle. The protein localises to the cytoplasm. The protein resides in the cell cortex. It localises to the lamellipodium. Its function is as follows. Acts as a RAC1 guanine nucleotide exchange factor (GEF) and can induce membrane ruffling. May function as a positive regulator of apoptosis. Functions in cell migration, attachment and cell spreading. Promotes targeting of RAC1 to focal adhesions. Downstream of NMDA receptors and CaMKK-CaMK1 signaling cascade, promotes the formation of spines and synapses in hippocampal neurons. The polypeptide is Rho guanine nucleotide exchange factor 7 (Arhgef7) (Mus musculus (Mouse)).